Reading from the N-terminus, the 240-residue chain is Ubiquinone biosynthesis O-methyltransferase (240 aa).

S-adenosyl-L-methionine-binding residues include arginine 36, glycine 60, aspartate 81, and leucine 123.

It belongs to the methyltransferase superfamily. UbiG/COQ3 family.

It carries out the reaction a 3-demethylubiquinol + S-adenosyl-L-methionine = a ubiquinol + S-adenosyl-L-homocysteine + H(+). The catalysed reaction is a 3-(all-trans-polyprenyl)benzene-1,2-diol + S-adenosyl-L-methionine = a 2-methoxy-6-(all-trans-polyprenyl)phenol + S-adenosyl-L-homocysteine + H(+). It participates in cofactor biosynthesis; ubiquinone biosynthesis. Functionally, O-methyltransferase that catalyzes the 2 O-methylation steps in the ubiquinone biosynthetic pathway. The sequence is that of Ubiquinone biosynthesis O-methyltransferase from Rickettsia bellii (strain OSU 85-389).